Consider the following 739-residue polypeptide: Phosphoribosylformylglycinamidine synthase subunit PurL (739 aa).

Residue His54 is part of the active site. The ATP site is built by Tyr57 and Lys96. Glu98 serves as a coordination point for Mg(2+). Residues 99 to 102 (SHNH) and Arg121 contribute to the substrate site. The Proton acceptor role is filled by His100. Position 122 (Asp122) interacts with Mg(2+). Residue Gln245 participates in substrate binding. Asp273 serves as a coordination point for Mg(2+). 317-319 (ESQ) is a substrate binding site. Residues Asp500 and Gly537 each coordinate ATP. Position 538 (Asn538) interacts with Mg(2+). Position 540 (Ser540) interacts with substrate.

This sequence belongs to the FGAMS family. Monomer. Part of the FGAM synthase complex composed of 1 PurL, 1 PurQ and 2 PurS subunits.

It localises to the cytoplasm. It catalyses the reaction N(2)-formyl-N(1)-(5-phospho-beta-D-ribosyl)glycinamide + L-glutamine + ATP + H2O = 2-formamido-N(1)-(5-O-phospho-beta-D-ribosyl)acetamidine + L-glutamate + ADP + phosphate + H(+). The protein operates within purine metabolism; IMP biosynthesis via de novo pathway; 5-amino-1-(5-phospho-D-ribosyl)imidazole from N(2)-formyl-N(1)-(5-phospho-D-ribosyl)glycinamide: step 1/2. Its function is as follows. Part of the phosphoribosylformylglycinamidine synthase complex involved in the purines biosynthetic pathway. Catalyzes the ATP-dependent conversion of formylglycinamide ribonucleotide (FGAR) and glutamine to yield formylglycinamidine ribonucleotide (FGAM) and glutamate. The FGAM synthase complex is composed of three subunits. PurQ produces an ammonia molecule by converting glutamine to glutamate. PurL transfers the ammonia molecule to FGAR to form FGAM in an ATP-dependent manner. PurS interacts with PurQ and PurL and is thought to assist in the transfer of the ammonia molecule from PurQ to PurL. This Bacillus cereus (strain AH187) protein is Phosphoribosylformylglycinamidine synthase subunit PurL.